Consider the following 505-residue polypeptide: ATP synthase subunit alpha (505 aa).

170-177 (GDRQTGKT) is a binding site for ATP.

Belongs to the ATPase alpha/beta chains family. In terms of assembly, F-type ATPases have 2 components, CF(1) - the catalytic core - and CF(0) - the membrane proton channel. CF(1) has five subunits: alpha(3), beta(3), gamma(1), delta(1), epsilon(1). CF(0) has four main subunits: a(1), b(1), b'(1) and c(9-12).

The protein resides in the cellular thylakoid membrane. It catalyses the reaction ATP + H2O + 4 H(+)(in) = ADP + phosphate + 5 H(+)(out). Functionally, produces ATP from ADP in the presence of a proton gradient across the membrane. The alpha chain is a regulatory subunit. The chain is ATP synthase subunit alpha from Synechococcus elongatus (strain ATCC 33912 / PCC 7942 / FACHB-805) (Anacystis nidulans R2).